The chain runs to 397 residues: Phosphoglycerate kinase (397 aa).

Substrate-binding positions include 21–23 (DFN), R37, 60–63 (HLGR), R119, and R152. ATP contacts are provided by residues K203, G294, E325, and 354-357 (GGDS).

Belongs to the phosphoglycerate kinase family. As to quaternary structure, monomer.

It is found in the cytoplasm. It carries out the reaction (2R)-3-phosphoglycerate + ATP = (2R)-3-phospho-glyceroyl phosphate + ADP. Its pathway is carbohydrate degradation; glycolysis; pyruvate from D-glyceraldehyde 3-phosphate: step 2/5. This chain is Phosphoglycerate kinase, found in Prosthecochloris aestuarii (strain DSM 271 / SK 413).